The primary structure comprises 318 residues: L-lactate dehydrogenase (318 aa).

NAD(+)-binding positions include V18, D39, K44, Y69, and G83–A84. Residues Q86 and R92 each contribute to the substrate site. NAD(+) contacts are provided by residues S105, V122–N124, and S147. N124–D127 serves as a coordination point for substrate. Position 152–155 (D152–R155) interacts with substrate. H179 serves as the catalytic Proton acceptor. At Y225 the chain carries Phosphotyrosine. T234 provides a ligand contact to substrate.

Belongs to the LDH/MDH superfamily. LDH family. As to quaternary structure, homotetramer.

It localises to the cytoplasm. It catalyses the reaction (S)-lactate + NAD(+) = pyruvate + NADH + H(+). Its pathway is fermentation; pyruvate fermentation to lactate; (S)-lactate from pyruvate: step 1/1. Its function is as follows. Catalyzes the conversion of lactate to pyruvate. This is L-lactate dehydrogenase from Clostridium botulinum (strain Kyoto / Type A2).